The chain runs to 284 residues: Tropomyosin isoforms a/b/d/f (284 aa).

Residues 1 to 284 adopt a coiled-coil conformation; the sequence is MDAIKKKMQA…DSTFQELSGY (284 aa). A disordered region spans residues 40 to 78; it reads EEELRDTQKKMTQTGDDLDKAQEDLSAATSKLEEKEKTV.

This sequence belongs to the tropomyosin family. As to expression, isoform a and isoform d are expressed in body wall muscles, vulva, anus muscles and male tail muscles. Located to the myofibrils of thin actin filaments.

The protein resides in the cytoplasm. It is found in the myofibril. It localises to the sarcomere. The protein localises to the i band. Its function is as follows. Tropomyosin, in association with the troponin complex, plays a central role in the calcium dependent regulation of muscle contraction. Involved in muscle actin filament organization and muscle arm extension and morphology. Protects actin filaments from depolymerization by unc-60 in vitro. Also has a role in male mating behavior by regulating the copulatory spicules. Binds to F-actin. This Caenorhabditis elegans protein is Tropomyosin isoforms a/b/d/f (lev-11).